The sequence spans 317 residues: uncharacterized protein (317 aa).

This sequence to A.aeolicus AA11 and AA34.

This is an uncharacterized protein from Aquifex aeolicus (strain VF5).